Consider the following 181-residue polypeptide: uncharacterized protein (181 aa).

The first 19 residues, 1–19 (MRRLLACSAGVLCFSQLGA), serve as a signal peptide directing secretion.

This is an uncharacterized protein from Treponema pallidum (strain Nichols).